A 181-amino-acid polypeptide reads, in one-letter code: MTEEHVVLLDEQDKPSGTLEKYAAHTLNTPLHLAFSCWLFNEDGQLLVTRRSLSKKAWPGVWTNSVCGHPQQGETTEEAIIRRCRFELGVEITDLTPVYPHFSYRATDPNGIVENEVCPVFAARATSVLQVNSEEVMDYQWSEFKSVWQSLLATPWAFSPWMVMQASDEQARKRLLNYCQR.

Residues H25 and H32 each contribute to the Mn(2+) site. One can recognise a Nudix hydrolase domain in the interval 30–164 (PLHLAFSCWL…PWAFSPWMVM (135 aa)). C67 is an active-site residue. Residue C67 coordinates Mg(2+). H69 is a Mn(2+) binding site. E87 contacts Mg(2+). Mn(2+)-binding residues include E114 and E116. E116 is an active-site residue.

Belongs to the IPP isomerase type 1 family. Homodimer. It depends on Mg(2+) as a cofactor. Mn(2+) serves as cofactor.

The protein localises to the cytoplasm. It carries out the reaction isopentenyl diphosphate = dimethylallyl diphosphate. It participates in isoprenoid biosynthesis; dimethylallyl diphosphate biosynthesis; dimethylallyl diphosphate from isopentenyl diphosphate: step 1/1. Catalyzes the 1,3-allylic rearrangement of the homoallylic substrate isopentenyl (IPP) to its highly electrophilic allylic isomer, dimethylallyl diphosphate (DMAPP). The protein is Isopentenyl-diphosphate Delta-isomerase of Salmonella typhi.